Reading from the N-terminus, the 276-residue chain is TIMELESS-interacting protein (276 aa).

A disordered region spans residues 1-54 (MLEQEENGLFEIPDYEHVEDETFPPFPPPGSPERDPAEAEPDEGSGAPVPVPPK). Residues 64–140 (LDATRLTSER…KEVQTCLKRI (77 aa)) form an interaction with TIMELESS region. Residues 217 to 243 (SNSQSLENDVTVEESSTGENQEESNGL) are compositionally biased toward polar residues. The tract at residues 217-276 (SNSQSLENDVTVEESSTGENQEESNGLISADGPHDVPSASTQEEGQLEAEETQLDHPNLD) is disordered. Phosphoserine is present on Ser-219. Thr-233 is subject to Phosphothreonine.

The protein belongs to the CSM3 family. Interacts with TIMELESS, which impairs TIMELESS self-association (via N-terminus). Associates with the MCM2-7 complex. Interacts with RPA2, PRDX2.

It is found in the cytoplasm. The protein resides in the nucleus. Its function is as follows. Plays an important role in the control of DNA replication and the maintenance of replication fork stability. Important for cell survival after DNA damage or replication stress. May be specifically required for the ATR-CHEK1 pathway in the replication checkpoint induced by hydroxyurea or ultraviolet light. Forms a complex with TIMELESS and this complex regulates DNA replication processes under both normal and stress conditions, stabilizes replication forks and influences both CHEK1 phosphorylation and the intra-S phase checkpoint in response to genotoxic stress. This Rattus norvegicus (Rat) protein is TIMELESS-interacting protein (Tipin).